The primary structure comprises 394 residues: Enoyl-[acyl-carrier-protein] reductase [NADH] (394 aa).

Residues 48–53 (GASTGY), 74–75 (YE), 111–112 (DA), and 139–140 (LA) each bind NAD(+). Substrate is bound at residue Tyr225. Tyr235 (proton donor) is an active-site residue. NAD(+)-binding positions include Lys244 and 273–275 (LVT).

The protein belongs to the TER reductase family. In terms of assembly, monomer.

It catalyses the reaction a 2,3-saturated acyl-[ACP] + NAD(+) = a (2E)-enoyl-[ACP] + NADH + H(+). The protein operates within lipid metabolism; fatty acid biosynthesis. Its function is as follows. Involved in the final reduction of the elongation cycle of fatty acid synthesis (FAS II). Catalyzes the reduction of a carbon-carbon double bond in an enoyl moiety that is covalently linked to an acyl carrier protein (ACP). In Opitutus terrae (strain DSM 11246 / JCM 15787 / PB90-1), this protein is Enoyl-[acyl-carrier-protein] reductase [NADH].